A 467-amino-acid chain; its full sequence is ATP synthase subunit beta (467 aa).

152–159 (GGAGVGKT) contributes to the ATP binding site.

Belongs to the ATPase alpha/beta chains family. As to quaternary structure, F-type ATPases have 2 components, CF(1) - the catalytic core - and CF(0) - the membrane proton channel. CF(1) has five subunits: alpha(3), beta(3), gamma(1), delta(1), epsilon(1). CF(0) has three main subunits: a(1), b(2) and c(9-12). The alpha and beta chains form an alternating ring which encloses part of the gamma chain. CF(1) is attached to CF(0) by a central stalk formed by the gamma and epsilon chains, while a peripheral stalk is formed by the delta and b chains.

The protein localises to the cell membrane. The enzyme catalyses ATP + H2O + 4 H(+)(in) = ADP + phosphate + 5 H(+)(out). Its function is as follows. Produces ATP from ADP in the presence of a proton gradient across the membrane. The catalytic sites are hosted primarily by the beta subunits. In Caldicellulosiruptor bescii (strain ATCC BAA-1888 / DSM 6725 / KCTC 15123 / Z-1320) (Anaerocellum thermophilum), this protein is ATP synthase subunit beta.